The chain runs to 292 residues: 4-hydroxy-tetrahydrodipicolinate synthase (292 aa).

Threonine 45 contributes to the pyruvate binding site. Catalysis depends on tyrosine 133, which acts as the Proton donor/acceptor. Residue lysine 161 is the Schiff-base intermediate with substrate of the active site. A pyruvate-binding site is contributed by isoleucine 203.

It belongs to the DapA family. In terms of assembly, homotetramer; dimer of dimers.

It is found in the cytoplasm. The enzyme catalyses L-aspartate 4-semialdehyde + pyruvate = (2S,4S)-4-hydroxy-2,3,4,5-tetrahydrodipicolinate + H2O + H(+). It functions in the pathway amino-acid biosynthesis; L-lysine biosynthesis via DAP pathway; (S)-tetrahydrodipicolinate from L-aspartate: step 3/4. Functionally, catalyzes the condensation of (S)-aspartate-beta-semialdehyde [(S)-ASA] and pyruvate to 4-hydroxy-tetrahydrodipicolinate (HTPA). This is 4-hydroxy-tetrahydrodipicolinate synthase from Sodalis glossinidius (strain morsitans).